The chain runs to 880 residues: Leucine--tRNA ligase (880 aa).

The 'HIGH' region motif lies at 46 to 56 (PYPSGALHMGH). Positions 638 to 642 (KMSKS) match the 'KMSKS' region motif. Residue K641 participates in ATP binding.

Belongs to the class-I aminoacyl-tRNA synthetase family.

It is found in the cytoplasm. It carries out the reaction tRNA(Leu) + L-leucine + ATP = L-leucyl-tRNA(Leu) + AMP + diphosphate. The polypeptide is Leucine--tRNA ligase (Xanthomonas oryzae pv. oryzae (strain MAFF 311018)).